The chain runs to 454 residues: Probable diacyglycerol O-acyltransferase tgs2 (454 aa).

The Proton acceptor role is filled by H139.

This sequence belongs to the long-chain O-acyltransferase family.

The enzyme catalyses an acyl-CoA + a 1,2-diacyl-sn-glycerol = a triacyl-sn-glycerol + CoA. It carries out the reaction a long chain fatty alcohol + a fatty acyl-CoA = a wax ester + CoA. It participates in glycerolipid metabolism; triacylglycerol biosynthesis. Its function is as follows. Catalyzes the terminal and only committed step in triacylglycerol synthesis by using diacylglycerol and fatty acyl CoA as substrates. Required for storage lipid synthesis. This is Probable diacyglycerol O-acyltransferase tgs2 (tgs2) from Mycobacterium tuberculosis (strain CDC 1551 / Oshkosh).